Reading from the N-terminus, the 218-residue chain is Glutathione S-transferase class-mu 26 kDa isozyme (218 aa).

One can recognise a GST N-terminal domain in the interval 1–83; sequence MAPKFGYWKV…YIADKHNMLG (83 aa). Glutathione is bound by residues 7–8, 41–45, 54–55, and 67–68; these read YW, WSNDK, NL, and QS. The GST C-terminal domain maps to 85–203; sequence CPKERAEISM…NSSRYIKWPL (119 aa). A substrate-binding site is contributed by Tyr111.

It belongs to the GST superfamily. Mu family. As to quaternary structure, homodimer. In terms of tissue distribution, tegument and in subtegumentary parenchymal cells. GST 26 may be actively excreted by adult worms.

The enzyme catalyses RX + glutathione = an S-substituted glutathione + a halide anion + H(+). Its function is as follows. Conjugation of reduced glutathione to a wide number of exogenous and endogenous hydrophobic electrophiles. In terms of biological role, GST isoenzymes appear to play a central role in the parasite detoxification system. Other functions are also suspected including a role in increasing the solubility of haematin in the parasite gut. In Schistosoma mansoni (Blood fluke), this protein is Glutathione S-transferase class-mu 26 kDa isozyme.